The sequence spans 309 residues: MEMO1 family protein C4H3.04c (309 aa).

The protein belongs to the MEMO1 family.

The protein is MEMO1 family protein C4H3.04c of Schizosaccharomyces pombe (strain 972 / ATCC 24843) (Fission yeast).